A 469-amino-acid polypeptide reads, in one-letter code: 3-isopropylmalate dehydratase large subunit (469 aa).

3 residues coordinate [4Fe-4S] cluster: Cys-350, Cys-410, and Cys-413.

It belongs to the aconitase/IPM isomerase family. LeuC type 1 subfamily. As to quaternary structure, heterodimer of LeuC and LeuD. The cofactor is [4Fe-4S] cluster.

It catalyses the reaction (2R,3S)-3-isopropylmalate = (2S)-2-isopropylmalate. Its pathway is amino-acid biosynthesis; L-leucine biosynthesis; L-leucine from 3-methyl-2-oxobutanoate: step 2/4. Functionally, catalyzes the isomerization between 2-isopropylmalate and 3-isopropylmalate, via the formation of 2-isopropylmaleate. This chain is 3-isopropylmalate dehydratase large subunit, found in Rhizobium etli (strain CIAT 652).